The chain runs to 83 residues: Heterin-1 (83 aa).

A signal peptide spans 1–22; it reads MNGKLLLVSLMVTMLVMQPAEA. A propeptide spanning residues 66-83 is cleaved from the precursor; that stretch reads VAGQIPFDEFMDILHYRP.

This sequence belongs to the non-disulfide-bridged peptide (NDBP) superfamily. Long chain multifunctional peptide (group 2) family. In terms of tissue distribution, expressed by the venom gland.

The protein localises to the secreted. It is found in the target cell membrane. Functionally, amphipathic peptide with potent activities against both Gram-positive and Gram-negative bacteria. Is the most active against the two Gram-positive Bacillus megaterium and Micrococcus luteus (MIC=4.0 uM for both). It has relatively low hemolytic activity against human erythrocytes. The protein is Heterin-1 of Heterometrus spinifer (Asia giant forest scorpion).